Here is a 448-residue protein sequence, read N- to C-terminus: Probable D-serine dehydratase (448 aa).

At Lys-111 the chain carries N6-(pyridoxal phosphate)lysine.

Belongs to the serine/threonine dehydratase family. DsdA subfamily. Requires pyridoxal 5'-phosphate as cofactor.

The catalysed reaction is D-serine = pyruvate + NH4(+). This chain is Probable D-serine dehydratase, found in Rhizobium etli (strain CIAT 652).